Here is a 103-residue protein sequence, read N- to C-terminus: Small ubiquitin-related modifier 3 (103 aa).

Glycyl lysine isopeptide (Lys-Gly) (interchain with G-Cter in SUMO2) cross-links involve residues K5 and K7. A Glycyl lysine isopeptide (Lys-Gly) (interchain with G-Cter in SUMO); alternate cross-link involves residue K11. Residue K11 forms a Glycyl lysine isopeptide (Lys-Gly) (interchain with G-Cter in SUMO2); alternate linkage. The Ubiquitin-like domain maps to 15-92; sequence DHINLKVAGQ…IDVFQQQTGG (78 aa). A Glycyl lysine isopeptide (Gly-Lys) (interchain with K-? in acceptor proteins) cross-link involves residue G92. Positions 93 to 103 are excised as a propeptide; sequence VPESSLAGHSF.

This sequence belongs to the ubiquitin family. SUMO subfamily. As to quaternary structure, covalently attached to a number of proteins. Interacts with BMAL1. Interacts with USP25 (via ts SIM domain); the interaction sumoylates USP25 and inhibits its ubiquitin hydrolyzing activity. Interacts with SAE2 and UBE2I. Polymeric chains can be formed through Lys-11 cross-linking. In terms of processing, cleavage of precursor form by SENP1, SENP2 or SENP5 is necessary for function. In terms of tissue distribution, expressed predominantly in liver.

It localises to the cytoplasm. Its subcellular location is the nucleus. It is found in the PML body. Ubiquitin-like protein which can be covalently attached to target lysines either as a monomer or as a lysine-linked polymer. Does not seem to be involved in protein degradation and may function as an antagonist of ubiquitin in the degradation process. Plays a role in a number of cellular processes such as nuclear transport, DNA replication and repair, mitosis and signal transduction. Covalent attachment to its substrates requires prior activation by the E1 complex SAE1-SAE2 and linkage to the E2 enzyme UBE2I, and can be promoted by an E3 ligase such as PIAS1-4, RANBP2 or CBX4. Plays a role in the regulation of sumoylation status of SETX. This Homo sapiens (Human) protein is Small ubiquitin-related modifier 3.